Here is a 92-residue protein sequence, read N- to C-terminus: Isoleucine--tRNA ligase (92 aa).

Residues C55, C58, C75, and C78 each coordinate Zn(2+).

This sequence belongs to the class-I aminoacyl-tRNA synthetase family. IleS type 1 subfamily. Monomer. Requires Zn(2+) as cofactor.

It localises to the cytoplasm. It carries out the reaction tRNA(Ile) + L-isoleucine + ATP = L-isoleucyl-tRNA(Ile) + AMP + diphosphate. Its function is as follows. Catalyzes the attachment of isoleucine to tRNA(Ile). As IleRS can inadvertently accommodate and process structurally similar amino acids such as valine, to avoid such errors it has two additional distinct tRNA(Ile)-dependent editing activities. One activity is designated as 'pretransfer' editing and involves the hydrolysis of activated Val-AMP. The other activity is designated 'posttransfer' editing and involves deacylation of mischarged Val-tRNA(Ile). The protein is Isoleucine--tRNA ligase (ileS) of Klebsiella aerogenes (Enterobacter aerogenes).